The following is a 147-amino-acid chain: 3-dehydroquinate dehydratase (147 aa).

The active-site Proton acceptor is Y23. The substrate site is built by N74, H80, and D87. H100 acts as the Proton donor in catalysis. Substrate is bound by residues 101-102 and R111; that span reads LS.

This sequence belongs to the type-II 3-dehydroquinase family. As to quaternary structure, homododecamer.

It carries out the reaction 3-dehydroquinate = 3-dehydroshikimate + H2O. The protein operates within metabolic intermediate biosynthesis; chorismate biosynthesis; chorismate from D-erythrose 4-phosphate and phosphoenolpyruvate: step 3/7. Functionally, catalyzes a trans-dehydration via an enolate intermediate. In Clostridium botulinum (strain Kyoto / Type A2), this protein is 3-dehydroquinate dehydratase.